Reading from the N-terminus, the 509-residue chain is Glucose-1-phosphate adenylyltransferase large subunit 4, chloroplastic/amyloplastic (509 aa).

The transit peptide at Met-1–Ser-36 directs the protein to the chloroplast.

This sequence belongs to the bacterial/plant glucose-1-phosphate adenylyltransferase family. Heterotetramer composed of two small and two large subunits. As to expression, expressed in leaves and stems.

The protein localises to the plastid. Its subcellular location is the chloroplast. It catalyses the reaction alpha-D-glucose 1-phosphate + ATP + H(+) = ADP-alpha-D-glucose + diphosphate. The protein operates within glycan biosynthesis; starch biosynthesis. Activated by 3'phosphoglycerate, inhibited by orthophosphate. Allosteric regulation. Involved in synthesis of starch. Catalyzes the synthesis of ADP-glucose, a molecule that serves as an activated glycosyl donor for alpha-1,4-glucan synthesis. Essential for starch synthesis in leaf chloroplasts. The chain is Glucose-1-phosphate adenylyltransferase large subunit 4, chloroplastic/amyloplastic from Oryza sativa subsp. japonica (Rice).